A 184-amino-acid polypeptide reads, in one-letter code: Oligoribonuclease (184 aa).

Residues 10–172 enclose the Exonuclease domain; that stretch reads LVWVDCEMTG…ADVLESIAEL (163 aa). Y129 is an active-site residue.

The protein belongs to the oligoribonuclease family.

It is found in the cytoplasm. Its function is as follows. 3'-to-5' exoribonuclease specific for small oligoribonucleotides. This is Oligoribonuclease from Tropheryma whipplei (strain Twist) (Whipple's bacillus).